The chain runs to 172 residues: Adenine phosphoribosyltransferase (172 aa).

This sequence belongs to the purine/pyrimidine phosphoribosyltransferase family. Homodimer.

The protein localises to the cytoplasm. The enzyme catalyses AMP + diphosphate = 5-phospho-alpha-D-ribose 1-diphosphate + adenine. Its pathway is purine metabolism; AMP biosynthesis via salvage pathway; AMP from adenine: step 1/1. Functionally, catalyzes a salvage reaction resulting in the formation of AMP, that is energically less costly than de novo synthesis. This chain is Adenine phosphoribosyltransferase, found in Clostridium kluyveri (strain NBRC 12016).